A 309-amino-acid chain; its full sequence is Formimidoylglutamase (309 aa).

Mn(2+)-binding residues include His-120, Asp-145, His-147, Asp-149, Asp-236, and Asp-238.

Belongs to the arginase family. The cofactor is Mn(2+).

The catalysed reaction is N-formimidoyl-L-glutamate + H2O = formamide + L-glutamate. The protein operates within amino-acid degradation; L-histidine degradation into L-glutamate; L-glutamate from N-formimidoyl-L-glutamate (hydrolase route): step 1/1. Functionally, catalyzes the conversion of N-formimidoyl-L-glutamate to L-glutamate and formamide. The protein is Formimidoylglutamase of Chromobacterium violaceum (strain ATCC 12472 / DSM 30191 / JCM 1249 / CCUG 213 / NBRC 12614 / NCIMB 9131 / NCTC 9757 / MK).